The primary structure comprises 396 residues: Phosphoglycerate kinase (396 aa).

Residues 21–23, Arg36, 59–62, Arg119, and Arg156 each bind substrate; these read DFN and HLGK. ATP is bound by residues Lys206, Gly294, Glu325, and 352–355; that span reads GGDS.

This sequence belongs to the phosphoglycerate kinase family. As to quaternary structure, monomer.

It localises to the cytoplasm. It catalyses the reaction (2R)-3-phosphoglycerate + ATP = (2R)-3-phospho-glyceroyl phosphate + ADP. Its pathway is carbohydrate degradation; glycolysis; pyruvate from D-glyceraldehyde 3-phosphate: step 2/5. The sequence is that of Phosphoglycerate kinase from Staphylococcus aureus (strain bovine RF122 / ET3-1).